Consider the following 226-residue polypeptide: Glutathione peroxidase 3 (226 aa).

An N-terminal signal peptide occupies residues 1–24; sequence MARLLQASCLLSLLLAGFLPQSRG. The active site involves selenocysteine 73. Selenocysteine 73 is a non-standard amino acid (selenocysteine).

Belongs to the glutathione peroxidase family. Homotetramer. Expressed intensively in the kidney and adrenal gland, and weakly in the cerebellum, heart, and lung. Secreted in plasma.

It is found in the secreted. It carries out the reaction 2 glutathione + H2O2 = glutathione disulfide + 2 H2O. It catalyses the reaction tert-butyl hydroperoxide + 2 glutathione = tert-butanol + glutathione disulfide + H2O. Functionally, protects cells and enzymes from oxidative damage, by catalyzing the reduction of hydrogen peroxide, lipid peroxides and organic hydroperoxide, by glutathione. This chain is Glutathione peroxidase 3, found in Macaca fuscata fuscata (Japanese macaque).